Here is a 567-residue protein sequence, read N- to C-terminus: 2-succinyl-5-enolpyruvyl-6-hydroxy-3-cyclohexene-1-carboxylate synthase (567 aa).

The protein belongs to the TPP enzyme family. MenD subfamily. Homodimer. The cofactor is Mg(2+). Requires Mn(2+) as cofactor. Thiamine diphosphate is required as a cofactor.

It catalyses the reaction isochorismate + 2-oxoglutarate + H(+) = 5-enolpyruvoyl-6-hydroxy-2-succinyl-cyclohex-3-ene-1-carboxylate + CO2. It functions in the pathway quinol/quinone metabolism; 1,4-dihydroxy-2-naphthoate biosynthesis; 1,4-dihydroxy-2-naphthoate from chorismate: step 2/7. It participates in quinol/quinone metabolism; menaquinone biosynthesis. Functionally, catalyzes the thiamine diphosphate-dependent decarboxylation of 2-oxoglutarate and the subsequent addition of the resulting succinic semialdehyde-thiamine pyrophosphate anion to isochorismate to yield 2-succinyl-5-enolpyruvyl-6-hydroxy-3-cyclohexene-1-carboxylate (SEPHCHC). This is 2-succinyl-5-enolpyruvyl-6-hydroxy-3-cyclohexene-1-carboxylate synthase from Yersinia pseudotuberculosis serotype O:1b (strain IP 31758).